A 238-amino-acid chain; its full sequence is Aspartate/glutamate leucyltransferase (238 aa).

It belongs to the R-transferase family. Bpt subfamily.

The protein localises to the cytoplasm. It carries out the reaction N-terminal L-glutamyl-[protein] + L-leucyl-tRNA(Leu) = N-terminal L-leucyl-L-glutamyl-[protein] + tRNA(Leu) + H(+). The catalysed reaction is N-terminal L-aspartyl-[protein] + L-leucyl-tRNA(Leu) = N-terminal L-leucyl-L-aspartyl-[protein] + tRNA(Leu) + H(+). Its function is as follows. Functions in the N-end rule pathway of protein degradation where it conjugates Leu from its aminoacyl-tRNA to the N-termini of proteins containing an N-terminal aspartate or glutamate. In Shewanella oneidensis (strain ATCC 700550 / JCM 31522 / CIP 106686 / LMG 19005 / NCIMB 14063 / MR-1), this protein is Aspartate/glutamate leucyltransferase.